The sequence spans 77 residues: MSAIDKRVKEIVAEQLGVDEAQVTNEASFMDDLGADSLDTVELVMALEEEFDIEISDEDAEKIQSVQDAIDYITEHT.

One can recognise a Carrier domain in the interval 2–77 (SAIDKRVKEI…DAIDYITEHT (76 aa)). Ser37 carries the post-translational modification O-(pantetheine 4'-phosphoryl)serine.

Belongs to the acyl carrier protein (ACP) family. In terms of processing, 4'-phosphopantetheine is transferred from CoA to a specific serine of apo-ACP by AcpS. This modification is essential for activity because fatty acids are bound in thioester linkage to the sulfhydryl of the prosthetic group.

The protein localises to the cytoplasm. Its pathway is lipid metabolism; fatty acid biosynthesis. Carrier of the growing fatty acid chain in fatty acid biosynthesis. In Geobacter metallireducens (strain ATCC 53774 / DSM 7210 / GS-15), this protein is Acyl carrier protein.